Reading from the N-terminus, the 134-residue chain is Large ribosomal subunit protein uL22 (134 aa).

Belongs to the universal ribosomal protein uL22 family. Part of the 50S ribosomal subunit. Contacts protein L32.

In terms of biological role, this protein binds specifically to 23S rRNA; its binding is stimulated by other ribosomal proteins, e.g. L4, L17, and L20. It is important during the early stages of 50S assembly. It makes multiple contacts with different domains of the 23S rRNA in the assembled 50S subunit and ribosome. Its function is as follows. The globular domain of the protein is located by the polypeptide exit tunnel on the outside of the subunit while an extended beta-hairpin forms part of the wall of the tunnel. Forms a pair of 'tweezers' with L32 that hold together two different domains of the 23S rRNA. Interacts with the tunnel-blocking modified macrolide azithromycin. Upon binding of the macrolide troleadomycin to the ribosome, the tip of the beta-hairpin is displaced, which severely restricts the tunnel. This and experiments in E.coli have led to the suggestion that it is part of the gating mechanism involved in translation arrest in the absence of the protein export system. This chain is Large ribosomal subunit protein uL22 (rplV), found in Deinococcus radiodurans (strain ATCC 13939 / DSM 20539 / JCM 16871 / CCUG 27074 / LMG 4051 / NBRC 15346 / NCIMB 9279 / VKM B-1422 / R1).